A 218-amino-acid polypeptide reads, in one-letter code: Probable glutamine ABC transporter permease protein GlnP (218 aa).

3 helical membrane passes run 19 to 39 (FLVT…FGLI), 65 to 85 (LPLL…GIKL), and 188 to 208 (FFPI…SLSL). One can recognise an ABC transmembrane type-1 domain in the interval 19-210 (FLVTLYVAFI…AVNYSLSLAA (192 aa)).

The protein belongs to the binding-protein-dependent transport system permease family. In terms of assembly, the complex is composed of two ATP-binding proteins (GlnQ), two transmembrane proteins (GlnM and GlnP) and a solute-binding protein (GlnH).

Its subcellular location is the cell membrane. In terms of biological role, part of the ABC transporter complex GlnHMPQ involved in glutamine transport. Probably responsible for the translocation of the substrate across the membrane. This is Probable glutamine ABC transporter permease protein GlnP (glnP) from Bacillus subtilis (strain 168).